The sequence spans 337 residues: Inositol 2-dehydrogenase (337 aa).

The protein belongs to the Gfo/Idh/MocA family. As to quaternary structure, homotetramer.

The catalysed reaction is myo-inositol + NAD(+) = scyllo-inosose + NADH + H(+). Functionally, involved in the oxidation of myo-inositol (MI) to 2-keto-myo-inositol (2KMI or 2-inosose). In Ralstonia nicotianae (strain ATCC BAA-1114 / GMI1000) (Ralstonia solanacearum), this protein is Inositol 2-dehydrogenase.